A 23-amino-acid polypeptide reads, in one-letter code: Cytochrome c3-1 (23 aa).

Residues 1–23 (AAPKAPADGLKMDKTKQXVVFNH) are disordered. H23 is a heme binding site.

Post-translationally, binds 4 heme groups per subunit.

Its subcellular location is the periplasm. In terms of biological role, participates in sulfate respiration coupled with phosphorylation by transferring electrons from the enzyme dehydrogenase to ferredoxin. The protein is Cytochrome c3-1 of Nitratidesulfovibrio vulgaris (Desulfovibrio vulgaris).